A 425-amino-acid chain; its full sequence is Probable threonylcarbamoyladenosine tRNA methylthiotransferase (425 aa).

Residues 2–110 enclose the MTTase N-terminal domain; sequence VKIYIENYGC…IIQAVEYALR (109 aa). Residues Cys-11, Cys-47, Cys-76, Cys-148, Cys-152, and Cys-155 each coordinate [4Fe-4S] cluster. Positions 133-363 constitute a Radical SAM core domain; sequence LSPRTVYFIV…HRIRLQISYE (231 aa). A TRAM domain is found at 366 to 425; that stretch reads QKYIGKKVEVLIHGEGKKGNVDAVTMNYKHVILPFGNSGEFRIAEIKNATSTYLLGEVMS.

The protein belongs to the methylthiotransferase family. CDKAL1 subfamily. [4Fe-4S] cluster serves as cofactor.

It catalyses the reaction N(6)-L-threonylcarbamoyladenosine(37) in tRNA + (sulfur carrier)-SH + AH2 + 2 S-adenosyl-L-methionine = 2-methylsulfanyl-N(6)-L-threonylcarbamoyladenosine(37) in tRNA + (sulfur carrier)-H + 5'-deoxyadenosine + L-methionine + A + S-adenosyl-L-homocysteine + 2 H(+). Catalyzes the methylthiolation of N6-threonylcarbamoyladenosine (t(6)A), leading to the formation of 2-methylthio-N6-threonylcarbamoyladenosine (ms(2)t(6)A) at position 37 in tRNAs that read codons beginning with adenine. The polypeptide is Probable threonylcarbamoyladenosine tRNA methylthiotransferase (Pyrococcus abyssi (strain GE5 / Orsay)).